The primary structure comprises 159 residues: Trafficking protein particle complex subunit 6A (159 aa).

A Phosphoserine modification is found at Ser-33.

Belongs to the TRAPP small subunits family. BET3 subfamily. As to quaternary structure, part of the multisubunit transport protein particle (TRAPP) complex. Heterodimer with TRAPPC3. The heterodimer TRAPPC3-TRAPPC6A interacts with TRAPPC2L. Interacts with TRAPPC2L. As to expression, ubiquitous, with lowest expression in skeletal muscle and brain and highest in kidney, liver and testis, as well as in cultured melanocytes.

Its subcellular location is the golgi apparatus. The protein resides in the cis-Golgi network. It localises to the endoplasmic reticulum. Functionally, may play a role in vesicular transport during the biogenesis of melanosomes. This chain is Trafficking protein particle complex subunit 6A, found in Mus musculus (Mouse).